We begin with the raw amino-acid sequence, 376 residues long: Protein STRICTOSIDINE SYNTHASE-LIKE 8 (376 aa).

Positions methionine 1 to glycine 31 are cleaved as a signal peptide. N-linked (GlcNAc...) asparagine glycosylation is found at asparagine 98, asparagine 172, and asparagine 224.

It belongs to the strictosidine synthase family.

The protein localises to the vacuole. This chain is Protein STRICTOSIDINE SYNTHASE-LIKE 8, found in Arabidopsis thaliana (Mouse-ear cress).